The primary structure comprises 280 residues: uncharacterized protein (280 aa).

3 consecutive transmembrane segments (helical) span residues 10 to 29 (IQQN…LLFN), 164 to 186 (FVFV…FAFI), and 209 to 228 (IFGL…YFLL).

It localises to the cell membrane. This is an uncharacterized protein from Bacillus subtilis (strain 168).